Consider the following 189-residue polypeptide: MNGRRKLNMQQNKRLITISMLSAIAFVLTFIKFPIPFLPPYLTLDFSDVPSLLATFTFGPVAGIIVALVKNLLNYLFSMGDPVGPFANFLAGASFLLTAYAIYKNKRSTKSLITGLIIATIVMTIVLSILNYFVLLPLYGMIFNLADIANNLKVIIVSGIIPFNIIKGIVISIVFILLYRRLANFLKRI.

Residues 1 to 9 (MNGRRKLNM) are Cytoplasmic-facing. Residues 10-29 (QQNKRLITISMLSAIAFVLT) form a helical membrane-spanning segment. The Periplasmic portion of the chain corresponds to 30 to 44 (FIKFPIPFLPPYLTL). An intramembrane region (helical) is located at residues 45 to 56 (DFSDVPSLLATF). Residues 57 to 58 (TF) are Cytoplasmic-facing. The chain crosses the membrane as a helical span at residues 59–78 (GPVAGIIVALVKNLLNYLFS). Residues 79-82 (MGDP) lie on the Periplasmic side of the membrane. The helical transmembrane segment at 83 to 104 (VGPFANFLAGASFLLTAYAIYK) threads the bilayer. At 105-107 (NKR) the chain is on the cytoplasmic side. Residues 108 to 132 (STKSLITGLIIATIVMTIVLSILNY) traverse the membrane as a helical segment. At 133-159 (FVLLPLYGMIFNLADIANNLKVIIVSG) the chain is on the periplasmic side. The helical transmembrane segment at 160 to 182 (IIPFNIIKGIVISIVFILLYRRL) threads the bilayer. The Cytoplasmic portion of the chain corresponds to 183 to 189 (ANFLKRI).

It belongs to the prokaryotic riboflavin transporter (P-RFT) (TC 2.A.87) family. As to quaternary structure, forms a stable energy-coupling factor (ECF) transporter complex composed of a membrane-embedded substrate-binding protein (S component), 2 ATP-binding proteins (A component) and 2 transmembrane proteins (T component). May be able to interact with more than 1 S component at a time.

It is found in the cell membrane. Its function is as follows. Mediates riboflavin uptake, may also transport FMN and roseoflavin. Probably a riboflavin-binding protein that interacts with the energy-coupling factor (ECF) ABC-transporter complex. Unlike classic ABC transporters this ECF transporter provides the energy necessary to transport a number of different substrates. The substrates themselves are bound by transmembrane, not extracytoplasmic soluble proteins. The chain is Riboflavin transporter RibU (ribU) from Staphylococcus aureus (strain TCH60).